Reading from the N-terminus, the 263-residue chain is Proteasome subunit alpha type-1 (263 aa).

Methionine 1 carries the N-acetylmethionine modification. Serine 110 is modified (phosphoserine; alternate). Serine 110 carries O-linked (GlcNAc) serine; alternate glycosylation. Residue lysine 115 forms a Glycyl lysine isopeptide (Lys-Gly) (interchain with G-Cter in ubiquitin) linkage. Residue serine 177 is modified to Phosphoserine. A Glycyl lysine isopeptide (Lys-Gly) (interchain with G-Cter in ubiquitin) cross-link involves residue lysine 208. The disordered stretch occupies residues 232 to 263 (FLEGLEERPQRKAQPTQPADEPAEKADEPMEH). The segment covering 253–263 (PAEKADEPMEH) has biased composition (basic and acidic residues).

The protein belongs to the peptidase T1A family. As to quaternary structure, the 26S proteasome consists of a 20S proteasome core and two 19S regulatory subunits. The 20S proteasome core is a barrel-shaped complex made of 28 subunits that are arranged in four stacked rings. The two outer rings are each formed by seven alpha subunits, and the two inner rings are formed by seven beta subunits. The proteolytic activity is exerted by three beta-subunits PSMB5, PSMB6 and PSMB7. Interacts with NOTCH3. Interacts with ZFAND1.

It is found in the cytoplasm. It localises to the nucleus. Component of the 20S core proteasome complex involved in the proteolytic degradation of most intracellular proteins. This complex plays numerous essential roles within the cell by associating with different regulatory particles. Associated with two 19S regulatory particles, forms the 26S proteasome and thus participates in the ATP-dependent degradation of ubiquitinated proteins. The 26S proteasome plays a key role in the maintenance of protein homeostasis by removing misfolded or damaged proteins that could impair cellular functions, and by removing proteins whose functions are no longer required. Associated with the PA200 or PA28, the 20S proteasome mediates ubiquitin-independent protein degradation. This type of proteolysis is required in several pathways including spermatogenesis (20S-PA200 complex) or generation of a subset of MHC class I-presented antigenic peptides (20S-PA28 complex). The sequence is that of Proteasome subunit alpha type-1 (PSMA1) from Bos taurus (Bovine).